A 1425-amino-acid polypeptide reads, in one-letter code: Ferlin 1 (1425 aa).

3 consecutive C2 domains span residues 1-123 (MAAK…RQWV), 161-281 (VNEG…PRWF), and 506-629 (TKAG…PVWL). The tract at residues 871–952 (RPQASRLSRE…ALAASPEEET (82 aa)) is disordered. Composition is skewed to basic and acidic residues over residues 877–889 (LSRE…ERGK) and 912–926 (ETEK…KKEG). C2 domains are found at residues 1032 to 1160 (EMDA…EQMV) and 1192 to 1319 (RADY…QQHY). The helical transmembrane segment at 1404–1424 (TGVWMTVAGIIALVIFVMFLL) threads the bilayer.

This sequence belongs to the ferlin family.

It localises to the golgi apparatus. The protein localises to the trans-Golgi network membrane. The protein resides in the endosome membrane. Its subcellular location is the cytoplasm. In terms of biological role, plays a role in microneme replenishment, probably at the vesicular trafficking level. Directs microneme organelle traffic differentially based on microneme population. Regulates microneme secretion: facilitates microneme membrane fusion with the plasma membrane. The chain is Ferlin 1 from Toxoplasma gondii.